Consider the following 292-residue polypeptide: Elongation factor Ts (292 aa).

Residues 79 to 82 form an involved in Mg(2+) ion dislocation from EF-Tu region; sequence TDFV.

The protein belongs to the EF-Ts family.

It is found in the cytoplasm. Associates with the EF-Tu.GDP complex and induces the exchange of GDP to GTP. It remains bound to the aminoacyl-tRNA.EF-Tu.GTP complex up to the GTP hydrolysis stage on the ribosome. The chain is Elongation factor Ts from Staphylococcus haemolyticus (strain JCSC1435).